A 174-amino-acid polypeptide reads, in one-letter code: DNA replication inhibitor plutonium (174 aa).

2 ANK repeats span residues 39–68 (YGNT…NIFA) and 72–103 (FGQN…DFNL). Threonine 167 is subject to Phosphothreonine.

Its function is as follows. Inhibits DNA replication early in developments. May bind and block the action of a replication or initiation factor. This is DNA replication inhibitor plutonium (plu) from Drosophila melanogaster (Fruit fly).